A 575-amino-acid polypeptide reads, in one-letter code: uncharacterized protein (575 aa).

The N-terminal stretch at 1–28 (MSNLLWKSLVVSPAVLGATLLVSSAAIA) is a signal peptide. The 65-residue stretch at 87–151 (SVSQFSDVQP…DRVNELIATA (65 aa)) folds into the SLH domain. Positions 158–196 (KQDLATLQRLQEEFSAELATLRGRVDALEARTAELEANQ) form a coiled coil.

Belongs to the OprB family.

This is an uncharacterized protein from Nostoc sp. (strain PCC 7120 / SAG 25.82 / UTEX 2576).